The primary structure comprises 460 residues: MKSAVENLTATRVKLNVEVPFEELKPSIDAAYKTVASQIQVPGFRKGKVPSKLIDQRVGRGYVLETAINDGLNGWYQAAVQETGVRPLSRPEVEITEVPDPSATDGELKFQVEIDVRPEIELPDYAGIKVEVAAAESSEADVDKSLDELRGRFGTLKSVERPAKNDDFLTIDITATIDGEDIDSAAGLSYQVGAGTMLEGLDEAVTGLSADEEAIFETTLVGGDHAGESAQVKVVVKAVKERELPEANDDFAQLASEFDTLAELREDLAKQAADSKVVEQGVEARDKVLDKLVELVEVPVPDSVVEEQIEAHFNPENAHGEGDHDTEEHRAEVKANTERAFQNEIILDAIADKEEVDVSQNELIDYIVTTASQYGMDPNQFAQIIDQSGQVPMMVSEVRRRKALAVVLGQAEVVDSEGNKVDLTDFVRPAGEAAAEEAAAGEANEEADVVASDDPAAVKF.

Residues 166–245 (DDFLTIDITA…VKAVKERELP (80 aa)) form the PPIase FKBP-type domain. The interval 434 to 460 (AAEEAAAGEANEEADVVASDDPAAVKF) is disordered. Positions 449–460 (VVASDDPAAVKF) are enriched in low complexity.

This sequence belongs to the FKBP-type PPIase family. Tig subfamily.

It is found in the cytoplasm. The catalysed reaction is [protein]-peptidylproline (omega=180) = [protein]-peptidylproline (omega=0). Functionally, involved in protein export. Acts as a chaperone by maintaining the newly synthesized protein in an open conformation. Functions as a peptidyl-prolyl cis-trans isomerase. This chain is Trigger factor, found in Paenarthrobacter aurescens (strain TC1).